The chain runs to 328 residues: Methionyl-tRNA formyltransferase (328 aa).

121–124 (SLLP) serves as a coordination point for (6S)-5,6,7,8-tetrahydrofolate.

The protein belongs to the Fmt family.

It catalyses the reaction L-methionyl-tRNA(fMet) + (6R)-10-formyltetrahydrofolate = N-formyl-L-methionyl-tRNA(fMet) + (6S)-5,6,7,8-tetrahydrofolate + H(+). In terms of biological role, attaches a formyl group to the free amino group of methionyl-tRNA(fMet). The formyl group appears to play a dual role in the initiator identity of N-formylmethionyl-tRNA by promoting its recognition by IF2 and preventing the misappropriation of this tRNA by the elongation apparatus. The protein is Methionyl-tRNA formyltransferase of Paraburkholderia phytofirmans (strain DSM 17436 / LMG 22146 / PsJN) (Burkholderia phytofirmans).